The chain runs to 233 residues: Large ribosomal subunit protein uL3 (233 aa).

The protein belongs to the universal ribosomal protein uL3 family. Part of the 50S ribosomal subunit. Forms a cluster with proteins L14 and L19.

In terms of biological role, one of the primary rRNA binding proteins, it binds directly near the 3'-end of the 23S rRNA, where it nucleates assembly of the 50S subunit. The protein is Large ribosomal subunit protein uL3 of Ureaplasma urealyticum serovar 10 (strain ATCC 33699 / Western).